Here is a 426-residue protein sequence, read N- to C-terminus: MSKSESLYAQAKQLIPGGVNSPVRAFTGVGGVPLFIERADGAYLFDVDGKAYIDYVGSWGPMVLGHNHPAIRQAVIEAVERGLSFGAPTEMEVKMAELVTNLVPTMDMVRMVNSGTEATMSAIRLARGFTGRDKIIKFEGCYHGHADCLLVKAGSGALTLGQPNSPGVPADFAKHTLTCTYNDLASVREAFEQYPRDIACIIVEPVAGNMNCVPPLPEFLPGLRALCDKFGALLIIDEVMTGFRVALAGAQDYYNVIPDLTCLGKIIGGGMPVGAFGGRRDVMDALAPTGPVYQAGTLSGNPIAMAAGFACLTEVAQVGIHETLTELTNLLADGLLDAAKAENIPLVVNHVGGMFGLFFTDAPTVTCYQDVMNCDVERFKRFFHLMLEEGVYLAPSAFEAGFMSVAHSKEDIQKTVDAARRCFAKL.

Lysine 265 carries the post-translational modification N6-(pyridoxal phosphate)lysine.

This sequence belongs to the class-III pyridoxal-phosphate-dependent aminotransferase family. HemL subfamily. Homodimer. Requires pyridoxal 5'-phosphate as cofactor.

It is found in the cytoplasm. It carries out the reaction (S)-4-amino-5-oxopentanoate = 5-aminolevulinate. It functions in the pathway porphyrin-containing compound metabolism; protoporphyrin-IX biosynthesis; 5-aminolevulinate from L-glutamyl-tRNA(Glu): step 2/2. This is Glutamate-1-semialdehyde 2,1-aminomutase from Yersinia enterocolitica serotype O:8 / biotype 1B (strain NCTC 13174 / 8081).